The chain runs to 692 residues: Glycine--tRNA ligase beta subunit (692 aa).

The protein belongs to the class-II aminoacyl-tRNA synthetase family. In terms of assembly, tetramer of two alpha and two beta subunits.

Its subcellular location is the cytoplasm. The enzyme catalyses tRNA(Gly) + glycine + ATP = glycyl-tRNA(Gly) + AMP + diphosphate. This is Glycine--tRNA ligase beta subunit from Limosilactobacillus fermentum (strain NBRC 3956 / LMG 18251) (Lactobacillus fermentum).